Here is a 664-residue protein sequence, read N- to C-terminus: Trifunctional UDP-glucose 4,6-dehydratase/UDP-4-keto-6-deoxy-D-glucose 3,5-epimerase/UDP-4-keto-L-rhamnose-reductase RHM3 (664 aa).

Position 13–19 (13–19 (GAAGFIA)) interacts with NAD(+). Threonine 132 contributes to the substrate binding site. Aspartate 133 (proton donor) is an active-site residue. Catalysis depends on proton acceptor residues glutamate 134 and tyrosine 159. 386 to 392 (GKTGWLG) contacts NADP(+).

It in the N-terminal section; belongs to the NAD(P)-dependent epimerase/dehydratase family. dTDP-glucose dehydratase subfamily. This sequence in the C-terminal section; belongs to the dTDP-4-dehydrorhamnose reductase family. NAD(+) is required as a cofactor. Requires NADP(+) as cofactor. In terms of tissue distribution, expressed in roots, stems, seedlings, and siliques. Lower expression in inflorescence tips, and leaves.

It carries out the reaction UDP-alpha-D-glucose = UDP-4-dehydro-6-deoxy-alpha-D-glucose + H2O. The protein operates within carbohydrate biosynthesis. Its function is as follows. Trifunctional enzyme involved in UDP-beta-L-rhamnose biosynthesis, a precursor of the primary cell wall components rhamnogalacturonan I (RG-I) and rhamnogalacturonan II (RG-II). Catalyzes the dehydration of UDP-glucose to form UDP-4-dehydro-6-deoxy-D-glucose followed by the epimerization of the C3' and C5' positions of UDP-4-dehydro-6-deoxy-D-glucose to form UDP-4-keto-beta-L-rhamnose and the reduction of UDP-4-keto-beta-L-rhamnose to yield UDP-beta-L-rhamnose. This is Trifunctional UDP-glucose 4,6-dehydratase/UDP-4-keto-6-deoxy-D-glucose 3,5-epimerase/UDP-4-keto-L-rhamnose-reductase RHM3 from Arabidopsis thaliana (Mouse-ear cress).